The chain runs to 166 residues: UPF0336 protein ML2425 (166 aa).

The MaoC-like domain maps to 10-131 (LIGKHYRQLD…VIAEVRSEVT (122 aa)).

The protein belongs to the UPF0336 family.

The protein is UPF0336 protein ML2425 of Mycobacterium leprae (strain TN).